We begin with the raw amino-acid sequence, 846 residues long: Penicillin G acylase (846 aa).

The first 26 residues, M1–A26, serve as a signal peptide directing secretion. Residue E178 coordinates Ca(2+). A propeptide spans A236–T289 (spacer peptide). The active-site Nucleophile is S290. D362, V364, D365, P494, and D541 together coordinate Ca(2+).

Belongs to the peptidase S45 family. In terms of assembly, heterodimer of an alpha subunit and a beta subunit processed from the same precursor. The cofactor is Ca(2+).

It localises to the periplasm. It carries out the reaction a penicillin + H2O = 6-aminopenicillanate + a carboxylate. The polypeptide is Penicillin G acylase (pac) (Escherichia coli).